The following is a 241-amino-acid chain: NH(3)-dependent NAD(+) synthetase (241 aa).

Residue 27-34 (GISGGIDS) participates in ATP binding. Position 33 (Asp33) interacts with Mg(2+). Arg109 provides a ligand contact to deamido-NAD(+). Thr129 provides a ligand contact to ATP. Residue Glu134 coordinates Mg(2+). Lys142 and Asp149 together coordinate deamido-NAD(+). Residues Lys158 and Thr180 each coordinate ATP. Residue 231 to 232 (HK) coordinates deamido-NAD(+).

It belongs to the NAD synthetase family. As to quaternary structure, homodimer.

The enzyme catalyses deamido-NAD(+) + NH4(+) + ATP = AMP + diphosphate + NAD(+) + H(+). It participates in cofactor biosynthesis; NAD(+) biosynthesis; NAD(+) from deamido-NAD(+) (ammonia route): step 1/1. In terms of biological role, catalyzes the ATP-dependent amidation of deamido-NAD to form NAD. Uses ammonia as a nitrogen source. The sequence is that of NH(3)-dependent NAD(+) synthetase from Thermoplasma acidophilum (strain ATCC 25905 / DSM 1728 / JCM 9062 / NBRC 15155 / AMRC-C165).